A 648-amino-acid chain; its full sequence is Nucleoside triphosphatase I (648 aa).

Residues 48 to 212 (FIGLKNLNSM…NNLIGLLRPN (165 aa)) enclose the Helicase ATP-binding domain. 61–68 (WDTGMGKT) contacts ATP. The short motif at 150 to 153 (DEVH) is the DEXH box element. The Helicase C-terminal domain maps to 378 to 541 (YIETCKIILN…KINVIFDLLK (164 aa)). A binding to the cap-specific mRNA (nucleoside-2'-O-)-methyltransferase region spans residues 467 to 533 (DIIILDMPWN…DIIKDKQGKI (67 aa)).

The protein belongs to the helicase family. NPH I subfamily. As to quaternary structure, monomer. Interacts (via C-terminus) with RAP94 (via N-terminus). Interacts with the cap-specific mRNA (nucleoside-2'-O-)-methyltransferase.

It is found in the virion. It catalyses the reaction a ribonucleoside 5'-triphosphate + H2O = a ribonucleoside 5'-diphosphate + phosphate + H(+). Its function is as follows. DNA-dependent ATPase required for providing the needed energy to achieve the termination of early transcripts. Acts in concert with the RAP94 subunit of the virion RNA polymerase and the capping enzyme/VTF to catalyze release of UUUUUNU-containing nascent RNA from the elongation complex. NPH-I must bind ssDNA in order to exhibit ATPase activity. The sequence is that of Nucleoside triphosphatase I (NPH1) from Amsacta (AmEPV).